Consider the following 274-residue polypeptide: NADPH-dependent 7-cyano-7-deazaguanine reductase (274 aa).

80-82 (VES) lines the substrate pocket. 82 to 83 (SK) is an NADPH binding site. Cys-181 acts as the Thioimide intermediate in catalysis. The active-site Proton donor is the Asp-188. Residue 220 to 221 (HE) coordinates substrate. Position 249 to 250 (249 to 250 (RG)) interacts with NADPH.

This sequence belongs to the GTP cyclohydrolase I family. QueF type 2 subfamily. Homodimer.

Its subcellular location is the cytoplasm. The catalysed reaction is 7-aminomethyl-7-carbaguanine + 2 NADP(+) = 7-cyano-7-deazaguanine + 2 NADPH + 3 H(+). It functions in the pathway tRNA modification; tRNA-queuosine biosynthesis. Its function is as follows. Catalyzes the NADPH-dependent reduction of 7-cyano-7-deazaguanine (preQ0) to 7-aminomethyl-7-deazaguanine (preQ1). The sequence is that of NADPH-dependent 7-cyano-7-deazaguanine reductase from Burkholderia pseudomallei (strain 1710b).